Here is a 1000-residue protein sequence, read N- to C-terminus: Sop-2-related protein 1 (1000 aa).

3 disordered regions span residues 355-374, 379-422, and 466-509; these read KIMK…QYQQ, HQQH…GPSE, and APSE…VARG. A compositionally biased stretch (low complexity) spans 390 to 404; the sequence is SSSSVPSTSSPSCSS. Residues 406-415 show a composition bias toward basic and acidic residues; it reads ANRKEMETVR. Low complexity predominate over residues 489–502; that stretch reads GPSQQQQIPGTSQQ. Positions 633–720 are RNA-binding; the sequence is REQILPQQYM…LNTSSVQPSE (88 aa). Residues 948 to 1000 are disordered; that stretch reads HRMHSQRPPSMGNSSTSSEASSTSPTNAATATSSPASNRPTTSTAQPPTLNPT. Residues 960 to 992 show a composition bias toward low complexity; the sequence is NSSTSSEASSTSPTNAATATSSPASNRPTTSTA.

In terms of assembly, binds through its N-terminal region to the N-terminal region of sop-2.

The protein localises to the nucleus. In terms of biological role, acts synergistically with sop-2 to maintain the transcriptionally repressive state of homeotic genes throughout development. Not required to initiate repression, but to maintain it during later stages of development. Also required to repress expression of other genes. Binds RNA in a sequence-independent manner. The polypeptide is Sop-2-related protein 1 (sor-1) (Caenorhabditis elegans).